The sequence spans 108 residues: Ig kappa chain V region GOM (108 aa).

A framework-1 region spans residues 1 to 23; sequence DIVMTQTPLSLSVSPGEPASISC. Residues C23 and C88 are joined by a disulfide bond. A complementarity-determining-1 region spans residues 24-34; that stretch reads RSSQSNLDYLN. Positions 35 to 49 are framework-2; sequence WYLQKAGQSPRLLPE. The disordered stretch occupies residues 44-66; that stretch reads PRLLPEQDSQRASGVPDRFSGSG. The complementarity-determining-2 stretch occupies residues 50 to 56; it reads QDSQRAS. Residues 57–88 are framework-3; sequence GVPDRFSGSGSGTDFTLRIGRVEAEDAGIYYC. The segment at 89–97 is complementarity-determining-3; it reads MQRSFYPYT. The framework-4 stretch occupies residues 98 to 107; sequence FGQGTRLEVR.

This Canis lupus familiaris (Dog) protein is Ig kappa chain V region GOM.